A 184-amino-acid chain; its full sequence is Large ribosomal subunit protein uL6 (184 aa).

Belongs to the universal ribosomal protein uL6 family. Part of the 50S ribosomal subunit.

Functionally, this protein binds to the 23S rRNA, and is important in its secondary structure. It is located near the subunit interface in the base of the L7/L12 stalk, and near the tRNA binding site of the peptidyltransferase center. In Methanosphaera stadtmanae (strain ATCC 43021 / DSM 3091 / JCM 11832 / MCB-3), this protein is Large ribosomal subunit protein uL6.